Reading from the N-terminus, the 87-residue chain is Small ribosomal subunit protein bS20 (87 aa).

The tract at residues 1 to 21 (MANHKSAEKRARQTIKKTERN) is disordered.

It belongs to the bacterial ribosomal protein bS20 family.

Binds directly to 16S ribosomal RNA. The polypeptide is Small ribosomal subunit protein bS20 (Campylobacter jejuni subsp. jejuni serotype O:23/36 (strain 81-176)).